The chain runs to 461 residues: MKIPFVEPVICLSVFAVTLNSPLTTQYVYRRIWEETGNYSIALESNTSECAKNKSSPIFAFQEEVQKKVSLFNLEMDISGLIPGLVSTFVFLSHSDHGGRKFPLILSSVGALANSAWLCLLSYFALPIQLLIASTFIGALFGNYTTFLGASFAYIVDQCKEKKQRTIRIAIIDFLFGVVSGLTGLSSGYFIRGLGFVWSFLIVTVALFVNLIYILLFLEDSMKESSSQNISVSWTETFKNLFHRTYMLFKNASGEQQSLCCLLLFTMITYFFVTIGVSPIFVLYELDSPLCWDEVLIGYGSALGSVTFFSSFLGIWLFSYCMEDIHMAFIGTFTTMVGMAMTAFARTTLMMFLVRLPFLFTVMPLSVLRSMISKVVHSTEQGTMFACLAFLETLGGITAVSTFNGIYSATVAWCKGFVFLLSAVLLLIPAISLCVIKYVSRNTGSYVLLIQEESSEDTSDR.

The N-terminal stretch at 1–25 (MKIPFVEPVICLSVFAVTLNSPLTT) is a signal peptide. The Extracellular segment spans residues 26–70 (QYVYRRIWEETGNYSIALESNTSECAKNKSSPIFAFQEEVQKKVS). N-linked (GlcNAc...) asparagine glycans are attached at residues N38, N46, and N53. The helical transmembrane segment at 71–91 (LFNLEMDISGLIPGLVSTFVF) threads the bilayer. Residues 92-101 (LSHSDHGGRK) lie on the Cytoplasmic side of the membrane. A helical membrane pass occupies residues 102-124 (FPLILSSVGALANSAWLCLLSYF). Over 125–133 (ALPIQLLIA) the chain is Extracellular. Residues 134 to 156 (STFIGALFGNYTTFLGASFAYIV) form a helical membrane-spanning segment. At 157–170 (DQCKEKKQRTIRIA) the chain is on the cytoplasmic side. A helical transmembrane segment spans residues 171–191 (IIDFLFGVVSGLTGLSSGYFI). Topologically, residues 192–195 (RGLG) are extracellular. A helical membrane pass occupies residues 196-216 (FVWSFLIVTVALFVNLIYILL). At 217-261 (FLEDSMKESSSQNISVSWTETFKNLFHRTYMLFKNASGEQQSLCC) the chain is on the cytoplasmic side. Residues 262–282 (LLLFTMITYFFVTIGVSPIFV) form a helical membrane-spanning segment. The Extracellular segment spans residues 283-294 (LYELDSPLCWDE). A helical transmembrane segment spans residues 295-315 (VLIGYGSALGSVTFFSSFLGI). The Cytoplasmic segment spans residues 316–324 (WLFSYCMED). A helical membrane pass occupies residues 325–345 (IHMAFIGTFTTMVGMAMTAFA). The Extracellular portion of the chain corresponds to 346–347 (RT). A helical membrane pass occupies residues 348-368 (TLMMFLVRLPFLFTVMPLSVL). Over 369-382 (RSMISKVVHSTEQG) the chain is Cytoplasmic. The chain crosses the membrane as a helical span at residues 383–403 (TMFACLAFLETLGGITAVSTF). Over 404–415 (NGIYSATVAWCK) the chain is Extracellular. Residues 416–436 (GFVFLLSAVLLLIPAISLCVI) traverse the membrane as a helical segment. The Cytoplasmic segment spans residues 437–461 (KYVSRNTGSYVLLIQEESSEDTSDR). A Tyrosine-based lysosomal-sorting motif motif is present at residues 446-449 (YVLL).

It belongs to the major facilitator superfamily. SLC46A family.

It localises to the lysosome membrane. The catalysed reaction is estrone 3-sulfate(out) + n H(+)(out) = estrone 3-sulfate(in) + n H(+)(in). It catalyses the reaction 25-hydroxyvitamin D3 sulfate(out) + n H(+)(out) = 25-hydroxyvitamin D3 sulfate(in) + n H(+)(in). It carries out the reaction cholate(out) + n H(+)(out) = cholate(in) + n H(+)(in). The enzyme catalyses glycocholate(out) + n H(+)(out) = glycocholate(in) + n H(+)(in). The catalysed reaction is taurocholate(out) + n H(+)(out) = taurocholate(in) + n H(+)(in). It catalyses the reaction dehydroepiandrosterone 3-sulfate(out) + n H(+)(out) = dehydroepiandrosterone 3-sulfate(in) + n H(+)(in). It carries out the reaction N-acetyl-D-muramoyl-L-alanyl-D-isoglutamine(out) + n H(+)(out) = N-acetyl-D-muramoyl-L-alanyl-D-isoglutamine(in) + n H(+)(in). The enzyme catalyses 2',3'-cGAMP(out) + n H(+)(out) = 2',3'-cGAMP(in) + n H(+)(in). Lysosomal proton-coupled steroid conjugate and bile acid transporter. Preferentially recognizes lipophilic steroid conjugates or bile acis as endogenous substrates and seems to mediate escape from lysosomes to the cytoplasm. Modulates hepatic cytosolic copper homeostasis, maybe acting as a lysosomal copper transporter and sequestering copper ions in the lysosome. Delivers pathogen-associated molecular patterns to cytosolic pattern recognition receptors as part of the innate immune response to microbes. Selectively transports bacterial muramyl dipeptide (MDP) into the cytosol for recognition by NOD2, triggering inflammatory responses. Likely acts as a redundant importer of cyclic GMP-AMP dinucleotides (cGAMPs) in monocyte and macrophage cell lineages. The transport mechanism, its electrogenicity and stoichiometry remain to be elucidated. The sequence is that of Lysosomal proton-coupled steroid conjugate and bile acid symporter SLC46A3 (SLC46A3) from Bos taurus (Bovine).